Here is a 26-residue protein sequence, read N- to C-terminus: Coenzyme PQQ synthesis protein A (26 aa).

The segment at residues 16–20 is a cross-link (pyrroloquinoline quinone (Glu-Tyr)); the sequence is EINMY.

The protein belongs to the PqqA family.

Its pathway is cofactor biosynthesis; pyrroloquinoline quinone biosynthesis. In terms of biological role, required for coenzyme pyrroloquinoline quinone (PQQ) biosynthesis. PQQ is probably formed by cross-linking a specific glutamate to a specific tyrosine residue and excising these residues from the peptide. The protein is Coenzyme PQQ synthesis protein A of Cereibacter sphaeroides (strain ATCC 17029 / ATH 2.4.9) (Rhodobacter sphaeroides).